The following is a 474-amino-acid chain: Gasdermin-C (474 aa).

The interval 1 to 237 is triggers pyroptosis; sequence MLYTFDQVSK…TCAILLSANA (237 aa).

This sequence belongs to the gasdermin family. As to quaternary structure, homooligomer; homooligomeric ring-shaped pore complex containing 27-28 subunits when inserted in the membrane. Cleavage by CASP8 relieves autoinhibition by releasing the N-terminal moiety (Gasdermin-C, N-terminal) that initiates pyroptosis. Post-translationally, palmitoylated.

Its subcellular location is the cytoplasm. The protein resides in the cytosol. The protein localises to the cell membrane. With respect to regulation, the full-length protein before cleavage is inactive: intramolecular interactions between N- and C-terminal domains mediate autoinhibition in the absence of activation signal. The intrinsic pyroptosis-inducing activity is carried by the released N-terminal moiety (Gasdermin-C, N-terminal) following cleavage by caspase CASP8. Functionally, this form constitutes the precursor of the pore-forming protein: upon cleavage, the released N-terminal moiety (Gasdermin-C, N-terminal) binds to membranes and forms pores, triggering pyroptosis. Pore-forming protein that causes membrane permeabilization and pyroptosis. Produced by the cleavage of gasdermin-C by caspase CASP8 in response to death signals. After cleavage, moves to the plasma membrane where it strongly binds to membrane inner leaflet lipids. Homooligomerizes within the membrane and forms pores of 10-15 nanometers (nm) of inner diameter, triggering pyroptosis. The polypeptide is Gasdermin-C (Rattus norvegicus (Rat)).